A 359-amino-acid chain; its full sequence is Peptide chain release factor 1 (359 aa).

The residue at position 235 (Gln235) is an N5-methylglutamine.

This sequence belongs to the prokaryotic/mitochondrial release factor family. In terms of processing, methylated by PrmC. Methylation increases the termination efficiency of RF1.

The protein resides in the cytoplasm. Its function is as follows. Peptide chain release factor 1 directs the termination of translation in response to the peptide chain termination codons UAG and UAA. This chain is Peptide chain release factor 1, found in Nitrosomonas europaea (strain ATCC 19718 / CIP 103999 / KCTC 2705 / NBRC 14298).